A 344-amino-acid chain; its full sequence is Sorting nexin-16 (344 aa).

Pro residues predominate over residues 1 to 10 (MATPYVPVPM). Disordered stretches follow at residues 1–66 (MATP…NTSS) and 81–107 (ASSI…EDRP). Residues 14–26 (NSASSFTTNRNQR) show a composition bias toward polar residues. Residues 27–40 (SSSFGSVSTSSNSS) are compositionally biased toward low complexity. Polar residues predominate over residues 41-66 (KGQLEDSNMGNFKQTSVPDQMDNTSS). Positions 105-218 (DRPSTPTILG…EFLCLDDPPG (114 aa)) constitute a PX domain. Residues R144, T146, and R184 each coordinate a 1,2-diacyl-sn-glycero-3-phospho-(1D-myo-inositol-3-phosphate). A Phosphoserine modification is found at S222. Residues 223 to 278 (LEESRAFCETLEETNYRLQKELLEKQKEMESLKKLLSEKQLHIDTLENRIRTLSLE) adopt a coiled-coil conformation.

Belongs to the sorting nexin family. Homooligomer. Interacts with EGFR. In terms of tissue distribution, detected in placenta, lung, liver,heart and pancreas.

The protein localises to the early endosome membrane. It is found in the late endosome membrane. It localises to the cytoplasm. The protein resides in the lysosome. Functionally, may be involved in several stages of intracellular trafficking. Plays a role in protein transport from early to late endosomes. Plays a role in protein transport to the lysosome. Promotes degradation of EGFR after EGF signaling. Plays a role in intracellular transport of vesicular stomatitis virus nucleocapsids from the endosome to the cytoplasm. The protein is Sorting nexin-16 (SNX16) of Homo sapiens (Human).